The following is a 126-amino-acid chain: Glycine cleavage system H protein (126 aa).

The 83-residue stretch at 24–106 (TITVGITDHA…YGEGWFFRMK (83 aa)) folds into the Lipoyl-binding domain. Lysine 65 is subject to N6-lipoyllysine.

This sequence belongs to the GcvH family. The glycine cleavage system is composed of four proteins: P, T, L and H. The cofactor is (R)-lipoate.

Functionally, the glycine cleavage system catalyzes the degradation of glycine. The H protein shuttles the methylamine group of glycine from the P protein to the T protein. This Psychrobacter arcticus (strain DSM 17307 / VKM B-2377 / 273-4) protein is Glycine cleavage system H protein.